We begin with the raw amino-acid sequence, 85 residues long: Exodeoxyribonuclease 7 small subunit (85 aa).

It belongs to the XseB family. As to quaternary structure, heterooligomer composed of large and small subunits.

The protein localises to the cytoplasm. It catalyses the reaction Exonucleolytic cleavage in either 5'- to 3'- or 3'- to 5'-direction to yield nucleoside 5'-phosphates.. Functionally, bidirectionally degrades single-stranded DNA into large acid-insoluble oligonucleotides, which are then degraded further into small acid-soluble oligonucleotides. This chain is Exodeoxyribonuclease 7 small subunit, found in Alkalilimnicola ehrlichii (strain ATCC BAA-1101 / DSM 17681 / MLHE-1).